A 196-amino-acid chain; its full sequence is Nucleotide kinase gp1.7 (196 aa).

Positions Pro97–Thr118 are disordered.

In terms of assembly, dodecamer.

It carries out the reaction dGMP + ATP = dGDP + ADP. The enzyme catalyses dTMP + ATP = dTDP + ADP. Nucleotide kinase that catalyzes the phosphorylation of dGMP and dTMP to dGDP and dTDP. A double mutation in this protein and the RecBCD inhibitor gp5.9 protein allow phage to overcome the retron Ec48 bacteriophage defense system. This protein alone when overexpressed in E.coli does not cause growth arrest; Y128C may be a silent mutation. The polypeptide is Nucleotide kinase gp1.7 (Escherichia coli (Bacteriophage T7)).